The chain runs to 514 residues: 2,3-bisphosphoglycerate-independent phosphoglycerate mutase (514 aa).

Residues Asp13 and Ser69 each coordinate Mn(2+). Ser69 acts as the Phosphoserine intermediate in catalysis. Substrate-binding positions include His128, 158–159 (RD), Arg189, Arg195, 263–266 (RADR), and Lys336. The Mn(2+) site is built by Asp402, His406, Asp443, His444, and His461.

This sequence belongs to the BPG-independent phosphoglycerate mutase family. In terms of assembly, monomer. Requires Mn(2+) as cofactor.

The enzyme catalyses (2R)-2-phosphoglycerate = (2R)-3-phosphoglycerate. It functions in the pathway carbohydrate degradation; glycolysis; pyruvate from D-glyceraldehyde 3-phosphate: step 3/5. Functionally, catalyzes the interconversion of 2-phosphoglycerate and 3-phosphoglycerate. This Akkermansia muciniphila (strain ATCC BAA-835 / DSM 22959 / JCM 33894 / BCRC 81048 / CCUG 64013 / CIP 107961 / Muc) protein is 2,3-bisphosphoglycerate-independent phosphoglycerate mutase.